The sequence spans 1445 residues: CD109 antigen (1445 aa).

The N-terminal stretch at 1–21 (MQGPPLLTAAHLLCVCTAALA) is a signal peptide. N-linked (GlcNAc...) asparagine glycosylation is found at Asn-68, Asn-118, Asn-247, Asn-279, Asn-365, Asn-419, Asn-513, and Asn-645. Positions 593-702 (DKSVNLMNAS…TWIWLDTNMG (110 aa)) are bait region (approximate). The isoglutamyl cysteine thioester (Cys-Gln) cross-link spans 921-924 (CGEQ). N-linked (GlcNAc...) asparagine glycosylation is found at Asn-1086 and Asn-1355. Ala-1420 carries the GPI-anchor amidated alanine lipid modification. Residues 1421 to 1445 (SGSHHHSSVIFIFCFKLLYFMELWL) constitute a propeptide, removed in mature form.

This sequence belongs to the protease inhibitor I39 (alpha-2-macroglobulin) family. In terms of assembly, heterodimer; disulfide-linked. Interacts with TGFB1 and TGFBR1. Forms a heteromeric complex with TGFBR1, TGFBR2 and TGFBR3 in a ligand-independent manner. In terms of processing, N-glycosylated. 2 forms of 150 (p150) and 120 kDa (p120) exist due to proteolytic degradation from a 180 kDa form. Widely expressed with high level in uterus, aorta, heart, lung, trachea, placenta and in fetal heart, kidney, liver, spleen and lung. Expressed by CD34(+) acute myeloid leukemia cell lines, T-cell lines, activated T-lymphoblasts, endothelial cells and activated platelets. Isoform 4 is expressed in placenta. Isoform 1 is expressed in keratinocytes and placenta.

It localises to the cell membrane. In terms of biological role, modulates negatively TGFB1 signaling in keratinocytes. The protein is CD109 antigen (CD109) of Homo sapiens (Human).